A 270-amino-acid chain; its full sequence is Formamidopyrimidine-DNA glycosylase (270 aa).

The active-site Schiff-base intermediate with DNA is P2. E3 acts as the Proton donor in catalysis. The active-site Proton donor; for beta-elimination activity is the K58. Positions 90, 109, and 152 each coordinate DNA. The FPG-type zinc finger occupies 237-270; it reads RVYGREGEPCQCGGVVKRIVQGGRSTFFCPRCQK. The Proton donor; for delta-elimination activity role is filled by R260.

It belongs to the FPG family. As to quaternary structure, monomer. Requires Zn(2+) as cofactor.

The catalysed reaction is Hydrolysis of DNA containing ring-opened 7-methylguanine residues, releasing 2,6-diamino-4-hydroxy-5-(N-methyl)formamidopyrimidine.. The enzyme catalyses 2'-deoxyribonucleotide-(2'-deoxyribose 5'-phosphate)-2'-deoxyribonucleotide-DNA = a 3'-end 2'-deoxyribonucleotide-(2,3-dehydro-2,3-deoxyribose 5'-phosphate)-DNA + a 5'-end 5'-phospho-2'-deoxyribonucleoside-DNA + H(+). In terms of biological role, involved in base excision repair of DNA damaged by oxidation or by mutagenic agents. Acts as a DNA glycosylase that recognizes and removes damaged bases. Has a preference for oxidized purines, such as 7,8-dihydro-8-oxoguanine (8-oxoG). Has AP (apurinic/apyrimidinic) lyase activity and introduces nicks in the DNA strand. Cleaves the DNA backbone by beta-delta elimination to generate a single-strand break at the site of the removed base with both 3'- and 5'-phosphates. The protein is Formamidopyrimidine-DNA glycosylase of Novosphingobium aromaticivorans (strain ATCC 700278 / DSM 12444 / CCUG 56034 / CIP 105152 / NBRC 16084 / F199).